A 103-amino-acid polypeptide reads, in one-letter code: Large ribosomal subunit protein uL24 (103 aa).

This sequence belongs to the universal ribosomal protein uL24 family. As to quaternary structure, part of the 50S ribosomal subunit.

In terms of biological role, one of two assembly initiator proteins, it binds directly to the 5'-end of the 23S rRNA, where it nucleates assembly of the 50S subunit. One of the proteins that surrounds the polypeptide exit tunnel on the outside of the subunit. The polypeptide is Large ribosomal subunit protein uL24 (Vesicomyosocius okutanii subsp. Calyptogena okutanii (strain HA)).